A 747-amino-acid chain; its full sequence is Ubiquitin carboxyl-terminal hydrolase 13 (747 aa).

Residues 140–668 (FGYENFGNTC…TAYVLFYKAM (529 aa)) enclose the USP domain. Cysteine 149 serves as the catalytic Nucleophile. Disordered stretches follow at residues 172-305 (PKKS…RPPD) and 318-367 (YENP…RKKS). Residues 174 to 183 (KSRESDQPRK) show a composition bias toward basic and acidic residues. Residue serine 198 is modified to Phosphoserine. The segment covering 225 to 235 (PVNSVNSNTAG) has biased composition (polar residues). Basic and acidic residues predominate over residues 251-260 (HVQDNNKKEG). Positions 319–343 (ENPSRGSSNSNNLDLKGESNSSLST) are enriched in polar residues. Residue histidine 619 is the Proton acceptor of the active site.

Belongs to the peptidase C19 family.

It catalyses the reaction Thiol-dependent hydrolysis of ester, thioester, amide, peptide and isopeptide bonds formed by the C-terminal Gly of ubiquitin (a 76-residue protein attached to proteins as an intracellular targeting signal).. The sequence is that of Ubiquitin carboxyl-terminal hydrolase 13 (UBP13) from Saccharomyces cerevisiae (strain ATCC 204508 / S288c) (Baker's yeast).